Consider the following 909-residue polypeptide: E3 ubiquitin-protein ligase HACE1 (909 aa).

An N-terminal helix important for homodimerization region spans residues 1–21 (MERAMEQLNRLTRSLRRARTV). ANK repeat units follow at residues 23–55 (LPDD…NSKF), 64–93 (VKRS…NPNY), 97–126 (SGCT…DVNI), 130–159 (EGLT…DVDV), 163–192 (MGQT…DINR), 196–226 (SGAT…YLSD), and 228–253 (NGVT…QYHP). The tract at residues 396–433 (KGQDQDGTSIPPFEPPGPGSYENLSTGTGESKPDVLGG) is disordered. The HECT domain maps to 574–909 (NCAKLKQGIA…HCGSYGYTMA (336 aa)). The active-site Glycyl thioester intermediate is the cysteine 876.

Homodimer. The homodimer is autoinhibited and stabilized by its N-terminal helix. Interacts with RAB1 (RAB1A, RAB1B or RAB1C), RAB4 (RAB4A or RAB4B) and RAB11 (RAB11A or RAB11B); in a GTP-dependent manner. Interacts with the 26S proteasomal complex through the 20S core proteasomal subunit. Interacts with RARB. In terms of processing, autoubiquitinated.

It is found in the golgi apparatus. The protein localises to the golgi stack membrane. Its subcellular location is the cytoplasm. The protein resides in the endoplasmic reticulum. The enzyme catalyses S-ubiquitinyl-[E2 ubiquitin-conjugating enzyme]-L-cysteine + [acceptor protein]-L-lysine = [E2 ubiquitin-conjugating enzyme]-L-cysteine + N(6)-ubiquitinyl-[acceptor protein]-L-lysine.. It functions in the pathway protein modification; protein ubiquitination. Its function is as follows. E3 ubiquitin-protein ligase involved in Golgi membrane fusion and regulation of small GTPases. Acts as a regulator of Golgi membrane dynamics during the cell cycle: recruited to Golgi membrane by Rab proteins and regulates postmitotic Golgi membrane fusion. Acts by mediating ubiquitination during mitotic Golgi disassembly, ubiquitination serving as a signal for Golgi reassembly later, after cell division. Specifically binds GTP-bound RAC1, mediating ubiquitination and subsequent degradation of active RAC1, thereby playing a role in host defense against pathogens. May also act as a transcription regulator via its interaction with RARB. The chain is E3 ubiquitin-protein ligase HACE1 (HACE1) from Bos taurus (Bovine).